A 111-amino-acid chain; its full sequence is Histone H2A-Bbd type 1 (111 aa).

Belongs to the histone H2A family. In terms of assembly, the nucleosome is a histone octamer containing two molecules each of H2A, H2B, H3 and H4 assembled in one H3-H4 heterotetramer and two H2A-H2B heterodimers. Incorporated into nucleosomes during late spermatogenesis. Interacts with H2BC1/TH2B; preferentially dimerizes with H2BC1/TH2B to form nucleosomes. As to expression, highly expressed in adult testis, mainly in spermatocytes.

It localises to the nucleus. It is found in the chromosome. Functionally, atypical histone H2A which replaces conventional H2A during late spermatogenesis and is involved in the replacement of histones to protamine in male germ cells. Core component of nucleosome: nucleosomes wrap and compact DNA into chromatin, limiting DNA accessibility to the cellular machineries which require DNA as a template. Nucleosomes containing H2AB1 only wrap 130 bp of DNA, compared to 147 bp for classical nucleosomes. In condensing spermatids, the heterodimer between H2AB1 and H2BC1/TH2B is loaded onto the nucleosomes and promotes loading of transition proteins (TNP1 and TNP2) onto the nucleosomes. Inclusion of the H2AB1-H2BC1/TH2B dimer into chromatin opens the nucleosomes, releasing the nucleosomal DNA ends and allowing the invasion of nucleosomes by transition proteins (TNP1 and TNP2). Then, transition proteins drive the recruitment and processing of protamines, which are responsible for histone eviction. This Mus musculus (Mouse) protein is Histone H2A-Bbd type 1 (H2ab1).